The chain runs to 308 residues: Taste receptor type 2 member 43 (308 aa).

Met-1 is a topological domain (extracellular). A helical transmembrane segment spans residues 2-22 (ITFLPIIFSILVVVTFVIGNC). Residues 23 to 46 (ANGFIALVNSTEWVKRQKISFADQ) are Cytoplasmic-facing. Residues 47–67 (ILTALAVSRVGLLWVLLLNWY) traverse the membrane as a helical segment. At 68 to 86 (ATVLNPAFYSVEVRTIVYN) the chain is on the extracellular side. The chain crosses the membrane as a helical span at residues 87–107 (LWAVINHFSNWLATSLSIFYL). Residues 108–126 (LKIANFSNLIFLHLKRRVK) lie on the Cytoplasmic side of the membrane. A helical transmembrane segment spans residues 127 to 147 (SVVLVILLGPLLFLVCHLFVV). Topologically, residues 148–178 (NMNEIVRTKEYEGNMTWKSKLRSAMYLSNTT) are extracellular. Asn-161 and Asn-176 each carry an N-linked (GlcNAc...) asparagine glycan. The chain crosses the membrane as a helical span at residues 179 to 199 (VTILANLVPFILTLISFLLLI). The Cytoplasmic portion of the chain corresponds to 200 to 229 (CSLCKHLKKMQLRDKGSQDPSTKVHIKALQ). The chain crosses the membrane as a helical span at residues 230-249 (TVISLLLCVIYFLSIMISSW). Residues 250–258 (SLGRVENKA) are Extracellular-facing. The chain crosses the membrane as a helical span at residues 259–279 (VFMFCKAIRFSYPSAHAFILI). At 280 to 308 (WGNKKLKQTLLSVLWNVRYCVKGQKLPSP) the chain is on the cytoplasmic side.

It belongs to the G-protein coupled receptor T2R family.

Its subcellular location is the membrane. The protein resides in the cell projection. The protein localises to the cilium membrane. In terms of biological role, gustducin-coupled receptor immplicated in the perception of bitter compounds in the oral cavity and the gastrointestinal tract. Signals through PLCB2 and the calcium-regulated cation channel TRPM5. Activated by the sulfonyl amide sweeteners saccharin and acesulfame K. In airway epithelial cells, binding of bitter compounds increases the intracellular calcium ion concentration and stimulates ciliary beat frequency. May act as chemosensory receptors in airway epithelial cells to detect and eliminate potential noxious agents from the airways. The sequence is that of Taste receptor type 2 member 43 (TAS2R43) from Papio hamadryas (Hamadryas baboon).